The following is a 273-amino-acid chain: SPRY domain-containing SOCS box protein 1 (273 aa).

Tyr-31 is subject to Phosphotyrosine. Residues 33–231 (KPTRLDLLLD…IRMRYLNGLD (199 aa)) form the B30.2/SPRY domain. The region spanning 232–273 (PEPLPLMDLCRRSVRLALGKERLGAIPALPLPASLKAYLLYQ) is the SOCS box domain.

This sequence belongs to the SPSB family. In terms of assembly, component of the probable ECS(SPSB1) E3 ubiquitin-protein ligase complex which contains CUL5, RNF7/RBX2, Elongin BC complex and SPSB1. Interacts with CUL5, RNF7, ELOB and ELOC. Directly interacts with MET tyrosine kinase domain in the presence and in the absence of HGF, however HGF treatment has a positive effect on this interaction. When phosphorylated, interacts with RASA1 without affecting its stability. Interacts (via B30.2/SPRY domain) with PAWR; this interaction is direct and occurs in association with the Elongin BC complex. Interacts with EPHB2. Interacts with NOS2.

It is found in the cytoplasm. The protein localises to the cytosol. It participates in protein modification; protein ubiquitination. Substrate recognition component of a SCF-like ECS (Elongin BC-CUL2/5-SOCS-box protein) E3 ubiquitin-protein ligase complex which mediates the ubiquitination and subsequent proteasomal degradation of target proteins. Negatively regulates nitric oxide (NO) production and limits cellular toxicity in activated macrophages by mediating the ubiquitination and proteasomal degradation of NOS2. Acts as a bridge which links the NOS2 with the ECS E3 ubiquitin ligase complex components ELOC and CUL5. The polypeptide is SPRY domain-containing SOCS box protein 1 (Spsb1) (Mus musculus (Mouse)).